The chain runs to 1157 residues: Myosin tail region-interacting protein MTI1 (1157 aa).

The SH3 domain maps to 5-69 (EVPFKVVAQF…PKSFVAVQGS (65 aa)). Disordered stretches follow at residues 68 to 116 (GSEV…GPVP) and 135 to 156 (TAVSAQVQHDSSSGNGERKVPM). Over residues 77 to 89 (SSPNTGSTEQRTI) the composition is skewed to polar residues. Basic and acidic residues predominate over residues 93–110 (VEQKDLPEPISPETKKET). Serine 103 carries the post-translational modification Phosphoserine. Residues 138-149 (SAQVQHDSSSGN) show a composition bias toward polar residues. Phosphoserine is present on residues serine 158 and serine 166. Disordered regions lie at residues 231–256 (PEPINRAQVESGRIETENDQLKKDLP) and 284–888 (KKAK…PKVA). 2 coiled-coil regions span residues 234–301 (INRA…NKNE) and 356–430 (EKEQ…GASR). Composition is skewed to basic and acidic residues over residues 242 to 256 (GRIETENDQLKKDLP), 284 to 296 (KKAKLEQEHERSA), and 312 to 383 (NEKT…RGEN). The segment covering 398–411 (EGDNDEEKEEEDSE) has biased composition (acidic residues). 2 stretches are compositionally biased toward basic and acidic residues: residues 412–423 (ENRRAALRERMA) and 506–524 (KTLDPHATTEHEQKQEHGT). Residues 544–558 (DSDEDTDDHEFEDAN) are compositionally biased toward acidic residues. Serine 565 carries the post-translational modification Phosphoserine. Residues 574 to 585 (GNNESENVNSGE) are compositionally biased toward low complexity. Residues 597 to 606 (RTAEVSHDIE) are compositionally biased toward basic and acidic residues. Positions 607-641 (NSSQNTTGNVLPVSSPQTRVARNGSINSLTKSISG) are enriched in polar residues. 3 positions are modified to phosphoserine: serine 621, serine 631, and serine 634. Threonine 636 is subject to Phosphothreonine. Serine 638 and serine 647 each carry phosphoserine. A compositionally biased stretch (basic and acidic residues) spans 642–653 (ENRRKSINEYHD). The segment covering 654–668 (TVSTNSSALTETAQD) has biased composition (polar residues). Composition is skewed to pro residues over residues 691-738 (PHPV…PVSS) and 747-765 (SIPPVPPTPPAPPAPPAPL). Residues 769-778 (KHNEVEEHVK) are compositionally biased toward basic and acidic residues. Positions 795–808 (NTAPPLPRAPPVPP) are enriched in pro residues. The segment covering 832-853 (QNVTASTPSMMSTQQRVPTSVL) has biased composition (polar residues). Position 850 is a phosphothreonine (threonine 850). The residue at position 889 (serine 889) is a Phosphoserine. 2 positions are modified to phosphothreonine: threonine 894 and threonine 895. Lysine 1012 is covalently cross-linked (Glycyl lysine isopeptide (Lys-Gly) (interchain with G-Cter in ubiquitin)).

In terms of assembly, binds to the SH3 domains of the type I myosins MYO3 and MYO5.

The protein localises to the cytoplasm. It localises to the cytoskeleton. It is found in the actin patch. In terms of biological role, involved in the regulation of actin cytoskeleton. The protein is Myosin tail region-interacting protein MTI1 (BBC1) of Saccharomyces cerevisiae (strain ATCC 204508 / S288c) (Baker's yeast).